The chain runs to 475 residues: Glycogen synthase (475 aa).

Position 15 (Lys15) interacts with ADP-alpha-D-glucose.

This sequence belongs to the glycosyltransferase 1 family. Bacterial/plant glycogen synthase subfamily.

It catalyses the reaction [(1-&gt;4)-alpha-D-glucosyl](n) + ADP-alpha-D-glucose = [(1-&gt;4)-alpha-D-glucosyl](n+1) + ADP + H(+). It participates in glycan biosynthesis; glycogen biosynthesis. Synthesizes alpha-1,4-glucan chains using ADP-glucose. This chain is Glycogen synthase, found in Anaeromyxobacter sp. (strain K).